A 559-amino-acid chain; its full sequence is Oxygen-dependent choline dehydrogenase (559 aa).

Position 4–33 (4–33 (DYIIIGAGSAGNVLATRLTEDSDVTVLLLE)) interacts with FAD. The active-site Proton acceptor is His473.

The protein belongs to the GMC oxidoreductase family. The cofactor is FAD.

It catalyses the reaction choline + A = betaine aldehyde + AH2. It carries out the reaction betaine aldehyde + NAD(+) + H2O = glycine betaine + NADH + 2 H(+). It participates in amine and polyamine biosynthesis; betaine biosynthesis via choline pathway; betaine aldehyde from choline (cytochrome c reductase route): step 1/1. Involved in the biosynthesis of the osmoprotectant glycine betaine. Catalyzes the oxidation of choline to betaine aldehyde and betaine aldehyde to glycine betaine at the same rate. The protein is Oxygen-dependent choline dehydrogenase of Cronobacter sakazakii (strain ATCC BAA-894) (Enterobacter sakazakii).